Here is a 290-residue protein sequence, read N- to C-terminus: Probable endonuclease 4 (290 aa).

Zn(2+) is bound by residues His-69, His-109, Glu-145, Asp-179, His-182, His-216, Asp-229, His-231, and Glu-261.

It belongs to the AP endonuclease 2 family. It depends on Zn(2+) as a cofactor.

The catalysed reaction is Endonucleolytic cleavage to 5'-phosphooligonucleotide end-products.. Endonuclease IV plays a role in DNA repair. It cleaves phosphodiester bonds at apurinic or apyrimidinic (AP) sites, generating a 3'-hydroxyl group and a 5'-terminal sugar phosphate. This Chlorobium limicola (strain DSM 245 / NBRC 103803 / 6330) protein is Probable endonuclease 4.